Consider the following 384-residue polypeptide: Protein V (384 aa).

Disordered regions lie at residues 1–23 and 38–318; these read MDQD…GGRE and SEPT…KKGH. Over residues 7-20 the composition is skewed to basic and acidic residues; it reads ILKEDSEVEREAPG. Positions 50–59 are enriched in polar residues; the sequence is LHNTINTPQG. Ser68 carries the phosphoserine; by host modification. The span at 83-101 shows a compositional bias: basic and acidic residues; the sequence is RSGEESRVSGRTSKPEAEA. Ser125 is subject to Phosphoserine; by host. Basic and acidic residues predominate over residues 150–168; that stretch reads GIEDENREMAAHPDKRGED. The segment covering 191–206 has biased composition (polar residues); that stretch reads ASNNGRSMEPGSSHSA. Ser192, Ser249, Ser257, and Ser260 each carry phosphoserine; by host. Positions 318, 337, 341, 353, 355, 358, 362, and 365 each coordinate Zn(2+).

It belongs to the paramyxoviruses V protein family. Interacts with host IFIH1/MDA5 and DHX58/LGP2. Interacts with host IRF3. Interacts with host RIGI regulatory protein (via CARDs domain) and host TRIM25 (via SPRY domain); these interactions prevent TRIM25-mediated ubiquitination of RIG-I and disrupts downstream RIG-I signaling.

The protein localises to the host cytoplasm. Functionally, plays an essential role in the inhibition of host immune response. Prevents the establishment of cellular antiviral state by blocking interferon-alpha/beta (IFN-alpha/beta) production and signaling pathway. Interacts with host IFIH1/MDA5 and DHX58/LGP2 to inhibit the transduction pathway involved in the activation of IFN-beta promoter, thus protecting the virus against cell antiviral state. Also interacts with and inhibits host IRF3. Blocks the type I interferon signaling pathway by disrupting the RIG-I signaling pathway. This is Protein V (P/V/C) from Sendai virus (strain Harris) (SeV).